The chain runs to 733 residues: tRNA (guanine(27)-N(2))-dimethyltransferase (733 aa).

The span at 1–18 (MENMAEEELLPLEKEEVE) shows a compositional bias: acidic residues. The segment at 1–78 (MENMAEEELL…LASAPEEAKS (78 aa)) is disordered. Position 26 is a phosphothreonine (Thr-26). Low complexity-rich tracts occupy residues 39–49 (PDSALDSAPTP) and 57–73 (PALA…ASAP). A Phosphoserine modification is found at Ser-66. The short motif at 135-139 (HKLRR) is the Nucleolar localization signal element. Residues 184–206 (YHCIICSATITRRTDMLGHVRRH) form a C2H2-type zinc finger. One can recognise a Trm1 methyltransferase domain in the interval 227 to 688 (EILKEADTDV…APLMQFKSIL (462 aa)). Arg-260, Asp-307, Asp-357, and Ala-358 together coordinate S-adenosyl-L-methionine. 4 residues coordinate Zn(2+): Cys-488, Cys-491, Cys-513, and Cys-515. Lys-585 participates in a covalent cross-link: Glycyl lysine isopeptide (Lys-Gly) (interchain with G-Cter in SUMO2). Phosphoserine occurs at positions 612 and 707.

Belongs to the class I-like SAM-binding methyltransferase superfamily. Trm1 family. As to expression, widely expressed.

The protein resides in the nucleus. The protein localises to the nucleolus. The catalysed reaction is guanosine(27) in tRNA(Tyr) + 2 S-adenosyl-L-methionine = N(2)-dimethylguanosine(27) in tRNA(Tyr) + 2 S-adenosyl-L-homocysteine + 2 H(+). Functionally, specifically dimethylates a single guanine residue at position 27 of tRNA(Tyr) using S-adenosyl-L-methionine as donor of the methyl groups. Dimethylation at position 27 of tRNA(Tyr) is required for efficient translation of tyrosine codons. Also required to maintain 3-(3-amino-3-carboxypropyl)uridine (acp3U) in the D-loop of several cytoplasmic tRNAs. This chain is tRNA (guanine(27)-N(2))-dimethyltransferase, found in Homo sapiens (Human).